Here is a 98-residue protein sequence, read N- to C-terminus: Large ribosomal subunit protein uL23 (98 aa).

The protein belongs to the universal ribosomal protein uL23 family. In terms of assembly, part of the 50S ribosomal subunit. Contacts protein L29, and trigger factor when it is bound to the ribosome.

Functionally, one of the early assembly proteins it binds 23S rRNA. One of the proteins that surrounds the polypeptide exit tunnel on the outside of the ribosome. Forms the main docking site for trigger factor binding to the ribosome. This is Large ribosomal subunit protein uL23 from Borrelia garinii subsp. bavariensis (strain ATCC BAA-2496 / DSM 23469 / PBi) (Borreliella bavariensis).